A 154-amino-acid polypeptide reads, in one-letter code: Transcriptional repressor NrdR (154 aa).

A zinc finger spans residues cysteine 3–cysteine 34. The ATP-cone domain maps to leucine 46–aspartate 136.

It belongs to the NrdR family. The cofactor is Zn(2+).

Functionally, negatively regulates transcription of bacterial ribonucleotide reductase nrd genes and operons by binding to NrdR-boxes. This is Transcriptional repressor NrdR from Mycobacterium bovis (strain ATCC BAA-935 / AF2122/97).